Here is a 128-residue protein sequence, read N- to C-terminus: uncharacterized protein (128 aa).

This is an uncharacterized protein from Homo sapiens (Human).